A 520-amino-acid polypeptide reads, in one-letter code: Serine/threonine-protein kinases drp72 (520 aa).

One can recognise a Protein kinase domain in the interval 20–281; it reads YTLQWIVGHG…NELARAVSAV (262 aa). ATP-binding positions include 26-34 and K49; that span reads VGHGGMSTV. The active-site Proton acceptor is the D148. Disordered regions lie at residues 315–334 and 366–504; these read ARPTTSVPASPTVLPERQEK and SGDS…DAAD. Over residues 374–394 the composition is skewed to low complexity; sequence TPETITQTVTPTETTTSEEPT. Positions 395-411 are enriched in pro residues; that stretch reads LAPPPVQPTRQPVPTPD. Residues 416-429 are compositionally biased toward polar residues; it reads RLPTTTQESPTRVS. Positions 440-449 are enriched in low complexity; sequence EQTTPGGQPP. Positions 450–460 are enriched in polar residues; that stretch reads LSTLPTSLGWQ. The span at 469–484 shows a compositional bias: low complexity; sequence QGNPNTTGNPANPGTP. A compositionally biased stretch (gly residues) spans 485–496; it reads GTTGGNGTGNAG.

The protein belongs to the protein kinase superfamily. Ser/Thr protein kinase family.

The enzyme catalyses L-seryl-[protein] + ATP = O-phospho-L-seryl-[protein] + ADP + H(+). It carries out the reaction L-threonyl-[protein] + ATP = O-phospho-L-threonyl-[protein] + ADP + H(+). The polypeptide is Serine/threonine-protein kinases drp72 (Corynebacterium efficiens (strain DSM 44549 / YS-314 / AJ 12310 / JCM 11189 / NBRC 100395)).